A 700-amino-acid polypeptide reads, in one-letter code: Elongation factor G (700 aa).

Residues 8–290 (ERYRNIGISA…AVVEYLPAPT (283 aa)) enclose the tr-type G domain. GTP contacts are provided by residues 17–24 (AHIDAGKT), 88–92 (DTPGH), and 142–145 (NKMD).

It belongs to the TRAFAC class translation factor GTPase superfamily. Classic translation factor GTPase family. EF-G/EF-2 subfamily.

The protein localises to the cytoplasm. Its function is as follows. Catalyzes the GTP-dependent ribosomal translocation step during translation elongation. During this step, the ribosome changes from the pre-translocational (PRE) to the post-translocational (POST) state as the newly formed A-site-bound peptidyl-tRNA and P-site-bound deacylated tRNA move to the P and E sites, respectively. Catalyzes the coordinated movement of the two tRNA molecules, the mRNA and conformational changes in the ribosome. In Haemophilus influenzae (strain 86-028NP), this protein is Elongation factor G.